A 144-amino-acid chain; its full sequence is 3-hydroxyacyl-[acyl-carrier-protein] dehydratase FabZ (144 aa).

The active site involves histidine 48.

It belongs to the thioester dehydratase family. FabZ subfamily.

The protein localises to the cytoplasm. The enzyme catalyses a (3R)-hydroxyacyl-[ACP] = a (2E)-enoyl-[ACP] + H2O. Functionally, involved in unsaturated fatty acids biosynthesis. Catalyzes the dehydration of short chain beta-hydroxyacyl-ACPs and long chain saturated and unsaturated beta-hydroxyacyl-ACPs. The protein is 3-hydroxyacyl-[acyl-carrier-protein] dehydratase FabZ of Bacillus thuringiensis (strain Al Hakam).